Here is a 1214-residue protein sequence, read N- to C-terminus: Receptor-type guanylate cyclase gcy-19 (1214 aa).

Positions 1-18 (MEHLIFLLIFGGYSPSIA) are cleaved as a signal peptide. The Extracellular portion of the chain corresponds to 19-517 (QITSSTTTTT…PQTFVDQYGA (499 aa)). 4 N-linked (GlcNAc...) asparagine glycosylation sites follow: Asn-85, Asn-363, Asn-441, and Asn-464. Residues 518–538 (LVFSIGGVLALAMLFLITCFF) form a helical membrane-spanning segment. Over 539–1214 (YVLRQRKLER…FRRQETLALM (676 aa)) the chain is Cytoplasmic. In terms of domain architecture, Protein kinase spans 572–859 (RMSKRSIQSG…KGNLMDHVFN (288 aa)). The 131-residue stretch at 917–1047 (TVFFSDVVKF…DTVNTASRME (131 aa)) folds into the Guanylate cyclase domain. The segment at 1116–1197 (NSSNMAYNPE…EKAREIHNEE (82 aa)) is disordered. The segment covering 1133–1142 (DDEDVDDESS) has biased composition (acidic residues). The span at 1186–1197 (LEEKAREIHNEE) shows a compositional bias: basic and acidic residues.

Belongs to the adenylyl cyclase class-4/guanylyl cyclase family. In terms of tissue distribution, expressed asymmetrically in ASE right (ASER) sensory neuron.

It localises to the cell membrane. It catalyses the reaction GTP = 3',5'-cyclic GMP + diphosphate. Guanylate cyclase involved in the production of the second messenger cGMP. The sequence is that of Receptor-type guanylate cyclase gcy-19 from Caenorhabditis briggsae.